Consider the following 204-residue polypeptide: Large ribosomal subunit protein bL25 (204 aa).

Belongs to the bacterial ribosomal protein bL25 family. CTC subfamily. As to quaternary structure, part of the 50S ribosomal subunit; part of the 5S rRNA/L5/L18/L25 subcomplex. Contacts the 5S rRNA. Binds to the 5S rRNA independently of L5 and L18.

Its function is as follows. This is one of the proteins that binds to the 5S RNA in the ribosome where it forms part of the central protuberance. The sequence is that of Large ribosomal subunit protein bL25 from Burkholderia mallei (strain NCTC 10247).